We begin with the raw amino-acid sequence, 354 residues long: Selenide, water dikinase (354 aa).

Cys-23 is a catalytic residue. Residues Lys-26 and 54-56 contribute to the ATP site; that span reads TSD. Mg(2+) is bound at residue Asp-57. Residues Asp-74, Asp-97, and 145 to 147 contribute to the ATP site; that span reads GHS. Asp-97 is a Mg(2+) binding site. Asp-233 provides a ligand contact to Mg(2+).

The protein belongs to the selenophosphate synthase 1 family. Class I subfamily. Homodimer. The cofactor is Mg(2+).

The catalysed reaction is hydrogenselenide + ATP + H2O = selenophosphate + AMP + phosphate + 2 H(+). Functionally, synthesizes selenophosphate from selenide and ATP. The protein is Selenide, water dikinase of Burkholderia ambifaria (strain MC40-6).